The following is a 213-amino-acid chain: Maleylacetoacetate isomerase (213 aa).

Residues 3–84 (NETVLYDYWR…YLAETRDGTG (82 aa)) enclose the GST N-terminal domain. The region spanning 89-213 (HPIDRQRVRA…QRAHPDRAKP (125 aa)) is the GST C-terminal domain.

Belongs to the GST superfamily. Zeta family.

It catalyses the reaction 4-maleylacetoacetate = 4-fumarylacetoacetate. The protein operates within amino-acid degradation; L-phenylalanine degradation; acetoacetate and fumarate from L-phenylalanine: step 5/6. The chain is Maleylacetoacetate isomerase (maiA) from Rhizobium meliloti (strain 1021) (Ensifer meliloti).